Consider the following 392-residue polypeptide: Sulfate adenylyltransferase (392 aa).

It belongs to the sulfate adenylyltransferase family.

The enzyme catalyses sulfate + ATP + H(+) = adenosine 5'-phosphosulfate + diphosphate. It participates in sulfur metabolism; hydrogen sulfide biosynthesis; sulfite from sulfate: step 1/3. The chain is Sulfate adenylyltransferase from Trichormus variabilis (strain ATCC 29413 / PCC 7937) (Anabaena variabilis).